We begin with the raw amino-acid sequence, 367 residues long: MEAERLNAIAQQLDDLRARGRELRRYLDYDEKSSKLEEVTRALEDPAVWNNAEKAQELGKEKRQLEDVVHNLRDIESLSSDLKDLFDLAEAEDDEDTLAAVEADIGELQAKVHALEFRRMFSNPMDPNPCFIEIQAGAGGTEAQDWAGMLERMYLRYCERKGFNVELMEESEGEVAGIKGATIKVSGDYAYGFLRTETGIHRLVRKSPFDSNARRHTSFSSVFVYPEVDDSIQIDINPADLRIDTYRASGAGGQHINKTDSAVRITHEPTGVVVQCQNDRSQHKNKAEAMSMLKARLYELELRKRQSEQQKLEDSKSDIGWGHQIRSYVLDQSRIKDLRTNFEVGNTQAVLDGDLDDFIAASLKQGV.

N5-methylglutamine is present on Q254.

It belongs to the prokaryotic/mitochondrial release factor family. Post-translationally, methylated by PrmC. Methylation increases the termination efficiency of RF2.

It localises to the cytoplasm. Peptide chain release factor 2 directs the termination of translation in response to the peptide chain termination codons UGA and UAA. In Aromatoleum aromaticum (strain DSM 19018 / LMG 30748 / EbN1) (Azoarcus sp. (strain EbN1)), this protein is Peptide chain release factor 2.